A 914-amino-acid chain; its full sequence is Sensor protein TorS (914 aa).

The Cytoplasmic portion of the chain corresponds to 1 to 8 (MNLTLTRR). A helical membrane pass occupies residues 9–29 (LWMGFALMALLTLTSTLVGWY). Over 30–332 (NLRFISQVEK…EKASARGQYS (303 aa)) the chain is Periplasmic. Residues 333 to 353 (LLLLGMVSLCALILILWRVVY) traverse the membrane as a helical segment. The 54-residue stretch at 354–407 (RSVTRPLAEQTQALQRLLDGDIDSPFPETAGVRELDTIGRLMDAFRSNVHALNR) folds into the HAMP domain. Topologically, residues 354-914 (RSVTRPLAEQ…WLHKKDLNAI (561 aa)) are cytoplasmic. One can recognise a Histidine kinase domain in the interval 450–664 (AMSHEIRTPL…CFCLRLPLRV (215 aa)). The residue at position 453 (H453) is a Phosphohistidine; by autocatalysis. The 116-residue stretch at 683 to 798 (RLLLIEDNPL…VLGQLLAHYL (116 aa)) folds into the Response regulatory domain. Position 733 is a 4-aspartylphosphate (D733). One can recognise an HPt domain in the interval 821 to 914 (GTEKIHEWLV…WLHKKDLNAI (94 aa)). H860 is subject to Phosphohistidine.

As to quaternary structure, may form homomultimers. Seems to interact with TorT and TorC apocytochrome. Activation requires a sequential transfer of a phosphate group from a His in the primary transmitter domain, to an Asp in the receiver domain and to a His in the secondary transmitter domain.

The protein resides in the cell inner membrane. It catalyses the reaction ATP + protein L-histidine = ADP + protein N-phospho-L-histidine.. With respect to regulation, inhibited by TorC apocytochrome. Functionally, member of the two-component regulatory system TorS/TorR involved in the anaerobic utilization of trimethylamine-N-oxide (TMAO). Detects the presence of TMAO in the medium and, in response, activates TorR via a four-step phosphorelay. When TMAO is removed, TorS can dephosphorylate TorR, probably by a reverse phosphorelay involving His-860 and Asp-733. This Escherichia coli (strain K12) protein is Sensor protein TorS (torS).